The chain runs to 880 residues: Alanine--tRNA ligase (880 aa).

H566, H570, C668, and H672 together coordinate Zn(2+).

It belongs to the class-II aminoacyl-tRNA synthetase family. It depends on Zn(2+) as a cofactor.

The protein localises to the cytoplasm. The catalysed reaction is tRNA(Ala) + L-alanine + ATP = L-alanyl-tRNA(Ala) + AMP + diphosphate. Its function is as follows. Catalyzes the attachment of alanine to tRNA(Ala) in a two-step reaction: alanine is first activated by ATP to form Ala-AMP and then transferred to the acceptor end of tRNA(Ala). Also edits incorrectly charged Ser-tRNA(Ala) and Gly-tRNA(Ala) via its editing domain. This is Alanine--tRNA ligase from Trichormus variabilis (strain ATCC 29413 / PCC 7937) (Anabaena variabilis).